Reading from the N-terminus, the 342-residue chain is Tetraacyldisaccharide 4'-kinase (342 aa).

Residue 68 to 75 (TVGGTGKT) coordinates ATP.

The protein belongs to the LpxK family.

It catalyses the reaction a lipid A disaccharide + ATP = a lipid IVA + ADP + H(+). Its pathway is glycolipid biosynthesis; lipid IV(A) biosynthesis; lipid IV(A) from (3R)-3-hydroxytetradecanoyl-[acyl-carrier-protein] and UDP-N-acetyl-alpha-D-glucosamine: step 6/6. Its function is as follows. Transfers the gamma-phosphate of ATP to the 4'-position of a tetraacyldisaccharide 1-phosphate intermediate (termed DS-1-P) to form tetraacyldisaccharide 1,4'-bis-phosphate (lipid IVA). The chain is Tetraacyldisaccharide 4'-kinase from Burkholderia ambifaria (strain MC40-6).